We begin with the raw amino-acid sequence, 89 residues long: Small ribosomal subunit protein uS15 (89 aa).

The protein belongs to the universal ribosomal protein uS15 family. Part of the 30S ribosomal subunit. Forms a bridge to the 50S subunit in the 70S ribosome, contacting the 23S rRNA.

In terms of biological role, one of the primary rRNA binding proteins, it binds directly to 16S rRNA where it helps nucleate assembly of the platform of the 30S subunit by binding and bridging several RNA helices of the 16S rRNA. Its function is as follows. Forms an intersubunit bridge (bridge B4) with the 23S rRNA of the 50S subunit in the ribosome. This chain is Small ribosomal subunit protein uS15, found in Orientia tsutsugamushi (strain Ikeda) (Rickettsia tsutsugamushi).